We begin with the raw amino-acid sequence, 1163 residues long: Ankyrin repeat-containing protein F37A4.4 (1163 aa).

The ANK repeat unit spans residues 856–885; sequence YGNTALHVATRRGYQNLVEILIKHGADRSF. Residues 929–1025 form the BRCT domain; that stretch reads LCVPEKFPVS…KLIEKDCDYL (97 aa).

This is Ankyrin repeat-containing protein F37A4.4 from Caenorhabditis elegans.